Here is a 318-residue protein sequence, read N- to C-terminus: Ferredoxin--NADP reductase (318 aa).

Residues Asp-33, Gln-41, Tyr-46, Val-84, Phe-115, Asp-276, and Thr-316 each coordinate FAD.

It belongs to the ferredoxin--NADP reductase type 2 family. In terms of assembly, homodimer. FAD is required as a cofactor.

The enzyme catalyses 2 reduced [2Fe-2S]-[ferredoxin] + NADP(+) + H(+) = 2 oxidized [2Fe-2S]-[ferredoxin] + NADPH. The chain is Ferredoxin--NADP reductase from Lactobacillus johnsonii (strain CNCM I-12250 / La1 / NCC 533).